The following is a 117-amino-acid chain: Non-specific lipid-transfer protein 1 (117 aa).

An N-terminal signal peptide occupies residues 1–26 (MARAQVLLMAAALVLMLTAAPRAAVA). Disulfide bonds link cysteine 29/cysteine 76, cysteine 39/cysteine 53, cysteine 54/cysteine 99, and cysteine 74/cysteine 113. Aspartate 33 carries the Cis-14-hydroxy-10,13-dioxo-7-heptadecenoic acid aspartate ester lipid modification.

This sequence belongs to the plant LTP family. Aleurone layer of developing and germinating seeds.

In terms of biological role, plant non-specific lipid-transfer proteins transfer phospholipids as well as galactolipids across membranes. May play a role in wax or cutin deposition in the cell walls of expanding epidermal cells and certain secretory tissues. The chain is Non-specific lipid-transfer protein 1 (LTP1) from Hordeum vulgare (Barley).